The sequence spans 430 residues: Trigger factor (430 aa).

In terms of domain architecture, PPIase FKBP-type spans 157 to 242 (GDLVALETWS…AVEVSEPVLP (86 aa)).

The protein belongs to the FKBP-type PPIase family. Tig subfamily.

The protein resides in the cytoplasm. It carries out the reaction [protein]-peptidylproline (omega=180) = [protein]-peptidylproline (omega=0). Involved in protein export. Acts as a chaperone by maintaining the newly synthesized protein in an open conformation. Functions as a peptidyl-prolyl cis-trans isomerase. The polypeptide is Trigger factor (Xanthomonas euvesicatoria pv. vesicatoria (strain 85-10) (Xanthomonas campestris pv. vesicatoria)).